The following is a 77-amino-acid chain: Acyl carrier protein (77 aa).

The region spanning methionine 1 to glutamine 76 is the Carrier domain. The residue at position 36 (serine 36) is an O-(pantetheine 4'-phosphoryl)serine.

It belongs to the acyl carrier protein (ACP) family. Post-translationally, 4'-phosphopantetheine is transferred from CoA to a specific serine of apo-ACP by AcpS. This modification is essential for activity because fatty acids are bound in thioester linkage to the sulfhydryl of the prosthetic group.

The protein resides in the cytoplasm. Its pathway is lipid metabolism; fatty acid biosynthesis. Carrier of the growing fatty acid chain in fatty acid biosynthesis. The protein is Acyl carrier protein of Sulfurihydrogenibium sp. (strain YO3AOP1).